Here is a 415-residue protein sequence, read N- to C-terminus: Serine hydroxymethyltransferase 3 (415 aa).

(6S)-5,6,7,8-tetrahydrofolate contacts are provided by residues L122 and 126-128 (GHL). At K230 the chain carries N6-(pyridoxal phosphate)lysine.

Belongs to the SHMT family. As to quaternary structure, homodimer. It depends on pyridoxal 5'-phosphate as a cofactor.

Its subcellular location is the cytoplasm. It catalyses the reaction (6R)-5,10-methylene-5,6,7,8-tetrahydrofolate + glycine + H2O = (6S)-5,6,7,8-tetrahydrofolate + L-serine. It functions in the pathway one-carbon metabolism; tetrahydrofolate interconversion. The protein operates within amino-acid biosynthesis; glycine biosynthesis; glycine from L-serine: step 1/1. Its function is as follows. Catalyzes the reversible interconversion of serine and glycine with tetrahydrofolate (THF) serving as the one-carbon carrier. This reaction serves as the major source of one-carbon groups required for the biosynthesis of purines, thymidylate, methionine, and other important biomolecules. Also exhibits THF-independent aldolase activity toward beta-hydroxyamino acids, producing glycine and aldehydes, via a retro-aldol mechanism. This chain is Serine hydroxymethyltransferase 3, found in Burkholderia lata (strain ATCC 17760 / DSM 23089 / LMG 22485 / NCIMB 9086 / R18194 / 383).